The following is a 569-amino-acid chain: Ribonuclease J (569 aa).

Zn(2+) is bound by residues His-81, His-83, Asp-85, His-86, His-150, and Asp-172. 373 to 377 contributes to the substrate binding site; it reads HASGH. His-399 contacts Zn(2+).

This sequence belongs to the metallo-beta-lactamase superfamily. RNA-metabolizing metallo-beta-lactamase-like family. Bacterial RNase J subfamily. As to quaternary structure, homodimer, may be a subunit of the RNA degradosome. It depends on Zn(2+) as a cofactor.

It is found in the cytoplasm. In terms of biological role, an RNase that has 5'-3' exonuclease and possibly endoonuclease activity. Involved in maturation of rRNA and in some organisms also mRNA maturation and/or decay. The protein is Ribonuclease J of Mycoplasma genitalium (strain ATCC 33530 / DSM 19775 / NCTC 10195 / G37) (Mycoplasmoides genitalium).